The chain runs to 78 residues: Probable two-component-system connector protein YcgZ (78 aa).

Its function is as follows. Probably a connector protein for RcsB/C regulation of biofilm formation, providing additional signal input into the two-component signaling pathway. Partially antagonizes the activities of YmgA and AriR, proteins that, via the Rcs phosphorelay, promote the synthesis of colanic acid, an exopolysaccharide and matrix component. The polypeptide is Probable two-component-system connector protein YcgZ (ycgZ) (Escherichia coli (strain K12)).